The sequence spans 151 residues: Pyruvoyl-dependent arginine decarboxylase (151 aa).

At serine 42 the chain carries Pyruvic acid (Ser).

This sequence belongs to the PdaD family. The cofactor is pyruvate.

It carries out the reaction L-arginine + H(+) = agmatine + CO2. This Methanothermobacter thermautotrophicus (strain ATCC 29096 / DSM 1053 / JCM 10044 / NBRC 100330 / Delta H) (Methanobacterium thermoautotrophicum) protein is Pyruvoyl-dependent arginine decarboxylase.